We begin with the raw amino-acid sequence, 142 residues long: MTRRIRDYKFEELLERAYSKLPARTVSKETFEVPRAEVMFVGGKTLILNFKQITDVINRDPKILQRYFVKELGVPAYMNESGQLILQGRFSSHVINRLIDLFVKKYVICPTCGSRFTKLIKKGKVFILKCEACGAETTLEAF.

It belongs to the eIF-2-beta/eIF-5 family. In terms of assembly, heterotrimer composed of an alpha, a beta and a gamma chain.

EIF-2 functions in the early steps of protein synthesis by forming a ternary complex with GTP and initiator tRNA. This Staphylothermus marinus (strain ATCC 43588 / DSM 3639 / JCM 9404 / F1) protein is Translation initiation factor 2 subunit beta.